The chain runs to 239 residues: Small ribosomal subunit protein uS3 (239 aa).

The KH type-2 domain occupies 39–107; that stretch reads IREFIKEECK…ELHLNIVEVR (69 aa). The segment covering 212–221 has biased composition (basic and acidic residues); the sequence is PQARDRKAQE. Residues 212-239 are disordered; that stretch reads PQARDRKAQELQDGPAPRGAGGNRRGDR. The span at 230 to 239 shows a compositional bias: gly residues; the sequence is GAGGNRRGDR.

This sequence belongs to the universal ribosomal protein uS3 family. In terms of assembly, part of the 30S ribosomal subunit. Forms a tight complex with proteins S10 and S14.

In terms of biological role, binds the lower part of the 30S subunit head. Binds mRNA in the 70S ribosome, positioning it for translation. This chain is Small ribosomal subunit protein uS3, found in Ruegeria sp. (strain TM1040) (Silicibacter sp.).